A 366-amino-acid polypeptide reads, in one-letter code: Inositol 2-dehydrogenase (366 aa).

It belongs to the Gfo/Idh/MocA family. Homotetramer.

The catalysed reaction is myo-inositol + NAD(+) = scyllo-inosose + NADH + H(+). In terms of biological role, involved in the oxidation of myo-inositol (MI) to 2-keto-myo-inositol (2KMI or 2-inosose). This Rhodococcus jostii (strain RHA1) protein is Inositol 2-dehydrogenase.